We begin with the raw amino-acid sequence, 239 residues long: uncharacterized protein (239 aa).

The 65-residue stretch at 1–65 folds into the S4 RNA-binding domain; sequence MRLDKLLANS…DYREFIYLMM (65 aa). Aspartate 103 functions as the Nucleophile in the catalytic mechanism.

Belongs to the pseudouridine synthase RsuA family.

The enzyme catalyses a uridine in RNA = a pseudouridine in RNA. This is an uncharacterized protein from Bacillus subtilis (strain 168).